A 288-amino-acid polypeptide reads, in one-letter code: 4-diphosphocytidyl-2-C-methyl-D-erythritol kinase (288 aa).

The active site involves K8. ATP is bound at residue 92–102; sequence PVAAGMAGGST. D134 is a catalytic residue.

The protein belongs to the GHMP kinase family. IspE subfamily.

It catalyses the reaction 4-CDP-2-C-methyl-D-erythritol + ATP = 4-CDP-2-C-methyl-D-erythritol 2-phosphate + ADP + H(+). The protein operates within isoprenoid biosynthesis; isopentenyl diphosphate biosynthesis via DXP pathway; isopentenyl diphosphate from 1-deoxy-D-xylulose 5-phosphate: step 3/6. Its function is as follows. Catalyzes the phosphorylation of the position 2 hydroxy group of 4-diphosphocytidyl-2C-methyl-D-erythritol. The polypeptide is 4-diphosphocytidyl-2-C-methyl-D-erythritol kinase (Clostridium perfringens (strain ATCC 13124 / DSM 756 / JCM 1290 / NCIMB 6125 / NCTC 8237 / Type A)).